The sequence spans 145 residues: Large ribosomal subunit protein uL15 (145 aa).

A disordered region spans residues Met1–Gln55. Residues Gly12–Gly21 are compositionally biased toward basic residues. The segment covering Arg22–Ala32 has biased composition (gly residues).

The protein belongs to the universal ribosomal protein uL15 family. Part of the 50S ribosomal subunit.

Functionally, binds to the 23S rRNA. The protein is Large ribosomal subunit protein uL15 of Bdellovibrio bacteriovorus (strain ATCC 15356 / DSM 50701 / NCIMB 9529 / HD100).